The primary structure comprises 436 residues: Histidine--tRNA ligase (436 aa).

Belongs to the class-II aminoacyl-tRNA synthetase family.

The protein localises to the cytoplasm. The enzyme catalyses tRNA(His) + L-histidine + ATP = L-histidyl-tRNA(His) + AMP + diphosphate + H(+). The sequence is that of Histidine--tRNA ligase from Thermococcus kodakarensis (strain ATCC BAA-918 / JCM 12380 / KOD1) (Pyrococcus kodakaraensis (strain KOD1)).